The primary structure comprises 354 residues: Uroporphyrinogen decarboxylase (354 aa).

Substrate-binding positions include 27-31, Asp77, Tyr154, Ser209, and His327; that span reads RQAGR.

It belongs to the uroporphyrinogen decarboxylase family. Homodimer.

It is found in the cytoplasm. The catalysed reaction is uroporphyrinogen III + 4 H(+) = coproporphyrinogen III + 4 CO2. It participates in porphyrin-containing compound metabolism; protoporphyrin-IX biosynthesis; coproporphyrinogen-III from 5-aminolevulinate: step 4/4. In terms of biological role, catalyzes the decarboxylation of four acetate groups of uroporphyrinogen-III to yield coproporphyrinogen-III. The polypeptide is Uroporphyrinogen decarboxylase (Saccharophagus degradans (strain 2-40 / ATCC 43961 / DSM 17024)).